The sequence spans 249 residues: Deoxyribose-phosphate aldolase (249 aa).

Residue aspartate 105 is the Proton donor/acceptor of the active site. Lysine 168 functions as the Schiff-base intermediate with acetaldehyde in the catalytic mechanism. Lysine 216 (proton donor/acceptor) is an active-site residue.

The protein belongs to the DeoC/FbaB aldolase family. DeoC type 1 subfamily.

Its subcellular location is the cytoplasm. The catalysed reaction is 2-deoxy-D-ribose 5-phosphate = D-glyceraldehyde 3-phosphate + acetaldehyde. It functions in the pathway carbohydrate degradation; 2-deoxy-D-ribose 1-phosphate degradation; D-glyceraldehyde 3-phosphate and acetaldehyde from 2-deoxy-alpha-D-ribose 1-phosphate: step 2/2. Functionally, catalyzes a reversible aldol reaction between acetaldehyde and D-glyceraldehyde 3-phosphate to generate 2-deoxy-D-ribose 5-phosphate. This Corynebacterium jeikeium (strain K411) protein is Deoxyribose-phosphate aldolase.